The primary structure comprises 200 residues: UPF0329 protein ECU06_1670 (200 aa).

The protein belongs to the UPF0329 family.

The protein is UPF0329 protein ECU06_1670 of Encephalitozoon cuniculi (strain GB-M1) (Microsporidian parasite).